Consider the following 59-residue polypeptide: Cecropin-A (59 aa).

A signal peptide spans 1–23 (MNFNKLFVIVLLAALAFFGQAEA). The residue at position 57 (Leu57) is a Leucine amide.

It belongs to the cecropin family.

The protein localises to the secreted. In terms of biological role, cecropins have lytic and antibacterial activity against several Gram-positive and Gram-negative bacteria. The polypeptide is Cecropin-A (CECA) (Culex pipiens pipiens (Northern house mosquito)).